Reading from the N-terminus, the 107-residue chain is Large ribosomal subunit protein uL24 (107 aa).

It belongs to the universal ribosomal protein uL24 family. As to quaternary structure, part of the 50S ribosomal subunit.

Its function is as follows. One of two assembly initiator proteins, it binds directly to the 5'-end of the 23S rRNA, where it nucleates assembly of the 50S subunit. Functionally, one of the proteins that surrounds the polypeptide exit tunnel on the outside of the subunit. In Neisseria gonorrhoeae (strain ATCC 700825 / FA 1090), this protein is Large ribosomal subunit protein uL24.